We begin with the raw amino-acid sequence, 379 residues long: MQNSESIIKNIKNSSYLIDKEFLVWPENAFIGDKNIELIEKWNLKSYIKERKNFFSDDSVKKEYEEIHKKFNEEAISSYHVIISNLEEIYENCKRNKKIYYQDIMPTVKKVIEFYKKQKKIFIKYFRIPKLSANYHIIHSVNTAILTVALGNEMGLNNYKTVELCSIALLHKIGFLFIPSKISEKKEALTEEELEIIKKYPIISYKIASTSNLSRSICLTLLTHKENLDGTGYPKGLTSENISIESNIIGAASAYSAIILDKAYKKSFNSGASIIELIKDADKKFDKRVLKLIINAISSCPLDFIVELNDNSIAKIVDIDESNPNLPYINYIIKNGKVIDKNEQSSVQSIPNTNTGIKKILNQNEIELIKNKYSLIDII.

The 197-residue stretch at 114-310 folds into the HD-GYP domain; it reads FYKKQKKIFI…PLDFIVELND (197 aa).

It depends on Mn(2+) as a cofactor.

The enzyme catalyses 3',3'-c-di-GMP + 2 H2O = 2 GMP + 2 H(+). Its function is as follows. Phosphodiesterase (PDE) that catalyzes the hydrolysis of cyclic diguanylate (c-di-GMP) to GMP. The chain is Cyclic di-GMP phosphodiesterase PdeB from Borreliella burgdorferi (strain ATCC 35210 / DSM 4680 / CIP 102532 / B31) (Borrelia burgdorferi).